The following is a 662-amino-acid chain: Translation factor GUF1, mitochondrial (662 aa).

A mitochondrion-targeting transit peptide spans 1-28 (MYIHSSRTVLARYGSRTPLLRPSVLGRY). Residues 62 to 244 (ENYRNFSIVA…AIVDHIPAPD (183 aa)) form the tr-type G domain. GTP-binding positions include 71 to 78 (AHVDHGKS), 137 to 141 (DTPGH), and 191 to 194 (NKID).

It belongs to the TRAFAC class translation factor GTPase superfamily. Classic translation factor GTPase family. LepA subfamily.

The protein resides in the mitochondrion inner membrane. It catalyses the reaction GTP + H2O = GDP + phosphate + H(+). Promotes mitochondrial protein synthesis. May act as a fidelity factor of the translation reaction, by catalyzing a one-codon backward translocation of tRNAs on improperly translocated ribosomes. Binds to mitochondrial ribosomes in a GTP-dependent manner. This Meyerozyma guilliermondii (strain ATCC 6260 / CBS 566 / DSM 6381 / JCM 1539 / NBRC 10279 / NRRL Y-324) (Yeast) protein is Translation factor GUF1, mitochondrial.